Reading from the N-terminus, the 112-residue chain is Large ribosomal subunit protein uL22 (112 aa).

This sequence belongs to the universal ribosomal protein uL22 family. Part of the 50S ribosomal subunit.

Its function is as follows. This protein binds specifically to 23S rRNA; its binding is stimulated by other ribosomal proteins, e.g. L4, L17, and L20. It is important during the early stages of 50S assembly. It makes multiple contacts with different domains of the 23S rRNA in the assembled 50S subunit and ribosome. Functionally, the globular domain of the protein is located near the polypeptide exit tunnel on the outside of the subunit, while an extended beta-hairpin is found that lines the wall of the exit tunnel in the center of the 70S ribosome. The protein is Large ribosomal subunit protein uL22 of Akkermansia muciniphila (strain ATCC BAA-835 / DSM 22959 / JCM 33894 / BCRC 81048 / CCUG 64013 / CIP 107961 / Muc).